We begin with the raw amino-acid sequence, 762 residues long: 5-methyltetrahydropteroyltriglutamate--homocysteine methyltransferase (762 aa).

Residues Arg-17–Lys-20 and Lys-111 each bind 5-methyltetrahydropteroyltri-L-glutamate. L-homocysteine contacts are provided by residues Ile-435 to Ser-437 and Glu-488. L-methionine contacts are provided by residues Ile-435–Ser-437 and Glu-488. Residues Arg-519–Cys-520 and Trp-565 contribute to the 5-methyltetrahydropteroyltri-L-glutamate site. Residue Asp-603 participates in L-homocysteine binding. Asp-603 is a binding site for L-methionine. Position 609 (Glu-609) interacts with 5-methyltetrahydropteroyltri-L-glutamate. His-645, Cys-647, and Glu-669 together coordinate Zn(2+). The active-site Proton donor is His-698. Cys-730 is a binding site for Zn(2+).

It belongs to the vitamin-B12 independent methionine synthase family. Requires Zn(2+) as cofactor.

The catalysed reaction is 5-methyltetrahydropteroyltri-L-glutamate + L-homocysteine = tetrahydropteroyltri-L-glutamate + L-methionine. It participates in amino-acid biosynthesis; L-methionine biosynthesis via de novo pathway; L-methionine from L-homocysteine (MetE route): step 1/1. Catalyzes the transfer of a methyl group from 5-methyltetrahydrofolate to homocysteine resulting in methionine formation. This Bacillus cereus (strain AH820) protein is 5-methyltetrahydropteroyltriglutamate--homocysteine methyltransferase.